The sequence spans 368 residues: Zinc finger protein 24 (368 aa).

Residue K22 forms a Glycyl lysine isopeptide (Lys-Gly) (interchain with G-Cter in SUMO2) linkage. K27 participates in a covalent cross-link: Glycyl lysine isopeptide (Lys-Gly) (interchain with G-Cter in SUMO1); alternate. Residue K27 forms a Glycyl lysine isopeptide (Lys-Gly) (interchain with G-Cter in SUMO2); alternate linkage. Positions 52–134 (RQRFRQFGYQ…TVLEDLESEL (83 aa)) constitute an SCAN box domain. S132 and S142 each carry phosphoserine. Residues K147, K177, and K236 each participate in a glycyl lysine isopeptide (Lys-Gly) (interchain with G-Cter in SUMO2) cross-link. Residues 251 to 273 (HICDECGKHFSQGSALILHQRIH) form a C2H2-type 1 zinc finger. The tract at residues 251-301 (HICDECGKHFSQGSALILHQRIHSGEKPYGCVECGKAFSRSSILVQHQRVH) is necessary and sufficient for nuclear localization. S274 is modified (phosphoserine). Residues K277 and K286 each participate in a glycyl lysine isopeptide (Lys-Gly) (interchain with G-Cter in SUMO2) cross-link. 3 consecutive C2H2-type zinc fingers follow at residues 279–301 (YGCV…QRVH), 307–329 (YKCL…QRIH), and 335–357 (YECV…QRRH). S292 bears the Phosphoserine mark. Phosphotyrosine is present on Y335. Glycyl lysine isopeptide (Lys-Gly) (interchain with G-Cter in SUMO2) cross-links involve residues K361 and K367.

The protein belongs to the krueppel C2H2-type zinc-finger protein family. Sumoylated.

It is found in the nucleus. Transcription factor required for myelination of differentiated oligodendrocytes. Required for the conversion of oligodendrocytes from the premyelinating to the myelinating state. In the developing central nervous system (CNS), involved in the maintenance in the progenitor stage by promoting the cell cycle. Specifically binds to the 5'-TCAT-3' DNA sequence. Has transcription repressor activity in vitro. This Pongo abelii (Sumatran orangutan) protein is Zinc finger protein 24 (ZNF24).